A 327-amino-acid chain; its full sequence is Nucleotide-binding protein Mflv_3714 (327 aa).

Basic and acidic residues predominate over residues 1–22 (MTRQGMRDDLRGEADSVVHDGT). Positions 1-29 (MTRQGMRDDLRGEADSVVHDGTDDIDNEN) are disordered. 50–57 (GLSGAGRG) lines the ATP pocket. A GTP-binding site is contributed by 101 to 104 (DVRS).

The protein belongs to the RapZ-like family.

Functionally, displays ATPase and GTPase activities. This Mycolicibacterium gilvum (strain PYR-GCK) (Mycobacterium gilvum (strain PYR-GCK)) protein is Nucleotide-binding protein Mflv_3714.